The chain runs to 203 residues: Thymidylate kinase (203 aa).

14–21 serves as a coordination point for ATP; that stretch reads GMDGIGKS.

This sequence belongs to the thymidylate kinase family.

It carries out the reaction dTMP + ATP = dTDP + ADP. In terms of biological role, phosphorylation of dTMP to form dTDP in both de novo and salvage pathways of dTTP synthesis. This Rickettsia typhi (strain ATCC VR-144 / Wilmington) protein is Thymidylate kinase.